The chain runs to 212 residues: Thymidylate kinase (212 aa).

11–18 (GPEGAGKT) is a binding site for ATP.

It belongs to the thymidylate kinase family.

It carries out the reaction dTMP + ATP = dTDP + ADP. Phosphorylation of dTMP to form dTDP in both de novo and salvage pathways of dTTP synthesis. This Streptococcus pneumoniae (strain P1031) protein is Thymidylate kinase.